We begin with the raw amino-acid sequence, 496 residues long: Probable cytosol aminopeptidase (496 aa).

2 residues coordinate Mn(2+): Lys-266 and Asp-271. Lys-278 is a catalytic residue. Residues Asp-289, Asp-348, and Glu-350 each contribute to the Mn(2+) site. Residue Arg-352 is part of the active site.

The protein belongs to the peptidase M17 family. Requires Mn(2+) as cofactor.

It is found in the cytoplasm. It carries out the reaction Release of an N-terminal amino acid, Xaa-|-Yaa-, in which Xaa is preferably Leu, but may be other amino acids including Pro although not Arg or Lys, and Yaa may be Pro. Amino acid amides and methyl esters are also readily hydrolyzed, but rates on arylamides are exceedingly low.. The enzyme catalyses Release of an N-terminal amino acid, preferentially leucine, but not glutamic or aspartic acids.. In terms of biological role, presumably involved in the processing and regular turnover of intracellular proteins. Catalyzes the removal of unsubstituted N-terminal amino acids from various peptides. The chain is Probable cytosol aminopeptidase from Pseudomonas syringae pv. tomato (strain ATCC BAA-871 / DC3000).